We begin with the raw amino-acid sequence, 645 residues long: 1-deoxy-D-xylulose-5-phosphate synthase 1 (645 aa).

The tract at residues 1 to 20 is disordered; that stretch reads MTDTKTPTLDRVAGPADLRS. Thiamine diphosphate contacts are provided by residues histidine 78 and 119-121; that span reads AHS. Aspartate 150 serves as a coordination point for Mg(2+). Residues 151–152, asparagine 179, tyrosine 291, and glutamate 373 each bind thiamine diphosphate; that span reads GS. Asparagine 179 contacts Mg(2+).

It belongs to the transketolase family. DXPS subfamily. In terms of assembly, homodimer. Mg(2+) is required as a cofactor. Requires thiamine diphosphate as cofactor.

It carries out the reaction D-glyceraldehyde 3-phosphate + pyruvate + H(+) = 1-deoxy-D-xylulose 5-phosphate + CO2. It functions in the pathway metabolic intermediate biosynthesis; 1-deoxy-D-xylulose 5-phosphate biosynthesis; 1-deoxy-D-xylulose 5-phosphate from D-glyceraldehyde 3-phosphate and pyruvate: step 1/1. Functionally, catalyzes the acyloin condensation reaction between C atoms 2 and 3 of pyruvate and glyceraldehyde 3-phosphate to yield 1-deoxy-D-xylulose-5-phosphate (DXP). In Roseobacter denitrificans (strain ATCC 33942 / OCh 114) (Erythrobacter sp. (strain OCh 114)), this protein is 1-deoxy-D-xylulose-5-phosphate synthase 1.